We begin with the raw amino-acid sequence, 297 residues long: Protoheme IX farnesyltransferase (297 aa).

The next 8 membrane-spanning stretches (helical) occupy residues 15 to 35, 39 to 59, 91 to 111, 112 to 132, 139 to 159, 166 to 186, 220 to 240, and 265 to 285; these read VVALILFTAVVGMFLAVPAPY, GLLVLSASIGISMVAASAAVF, VWGVFLGFIGLGILQLFVNII, TVVLTFISLIGYTIVYTLYLK, IVIGGAAGATPPVLGWTAVSG, ACLLFLIVFIWTPPHFWALAI, LLLVSLLPYLSGMSGLIYLVI, and AWSTFMYSINYLMLLFIALLF.

This sequence belongs to the UbiA prenyltransferase family. Protoheme IX farnesyltransferase subfamily.

The protein resides in the cell inner membrane. It catalyses the reaction heme b + (2E,6E)-farnesyl diphosphate + H2O = Fe(II)-heme o + diphosphate. It participates in porphyrin-containing compound metabolism; heme O biosynthesis; heme O from protoheme: step 1/1. Its function is as follows. Converts heme B (protoheme IX) to heme O by substitution of the vinyl group on carbon 2 of heme B porphyrin ring with a hydroxyethyl farnesyl side group. In Vesicomyosocius okutanii subsp. Calyptogena okutanii (strain HA), this protein is Protoheme IX farnesyltransferase.